The primary structure comprises 292 residues: NAD-dependent protein deacetylase sir-2.4 (292 aa).

The 262-residue stretch at 31–292 (IEKLRTLYNH…DEVPIPLKIS (262 aa)) folds into the Deacetylase sirtuin-type domain. Residues 56–75 (GAGVSTGSKLPDFRGKQGVW) and 116–119 (QNVD) each bind NAD(+). His136 functions as the Proton acceptor in the catalytic mechanism. Residues Cys144, Cys147, Cys163, and Cys169 each coordinate Zn(2+). Residues 216–218 (GTS), 242–244 (NYQ), and Val260 contribute to the NAD(+) site.

It belongs to the sirtuin family. Class IV subfamily. Requires Zn(2+) as cofactor.

The catalysed reaction is N(6)-acetyl-L-lysyl-[protein] + NAD(+) + H2O = 2''-O-acetyl-ADP-D-ribose + nicotinamide + L-lysyl-[protein]. In terms of biological role, NAD-dependent protein deacetylase. The sequence is that of NAD-dependent protein deacetylase sir-2.4 (sir-2.4) from Caenorhabditis elegans.